The primary structure comprises 313 residues: Glyoxylate/hydroxypyruvate reductase A (313 aa).

Arg228 is a catalytic residue. His276 serves as the catalytic Proton donor.

This sequence belongs to the D-isomer specific 2-hydroxyacid dehydrogenase family. GhrA subfamily.

The protein localises to the cytoplasm. The catalysed reaction is glycolate + NADP(+) = glyoxylate + NADPH + H(+). It carries out the reaction (R)-glycerate + NAD(+) = 3-hydroxypyruvate + NADH + H(+). The enzyme catalyses (R)-glycerate + NADP(+) = 3-hydroxypyruvate + NADPH + H(+). Functionally, catalyzes the NADPH-dependent reduction of glyoxylate and hydroxypyruvate into glycolate and glycerate, respectively. The polypeptide is Glyoxylate/hydroxypyruvate reductase A (Photorhabdus laumondii subsp. laumondii (strain DSM 15139 / CIP 105565 / TT01) (Photorhabdus luminescens subsp. laumondii)).